Here is a 192-residue protein sequence, read N- to C-terminus: U1 small nuclear ribonucleoprotein C (192 aa).

Residues 4-36 (YYCEYCDIYLTHSSPVGRRQHNQGRKHISAKIE) form a Matrin-type zinc finger. Positions 118 to 192 (PGANKYPNNN…FVNKNSEQPN (75 aa)) are disordered. Over residues 133–154 (RISNTPKPYNNYTNKPITNSPY) the composition is skewed to polar residues. Positions 164 to 173 (NNENSNNFSN) are enriched in low complexity. The span at 174–192 (YQMNKDNSNFVNKNSEQPN) shows a compositional bias: polar residues.

Belongs to the U1 small nuclear ribonucleoprotein C family. As to quaternary structure, U1 snRNP is composed of the 7 core Sm proteins B/B', D1, D2, D3, E, F and G that assemble in a heptameric protein ring on the Sm site of the small nuclear RNA to form the core snRNP, and at least 3 U1 snRNP-specific proteins U1-70K, U1-A and U1-C. U1-C interacts with U1 snRNA and the 5' splice-site region of the pre-mRNA.

The protein localises to the nucleus. Its function is as follows. Component of the spliceosomal U1 snRNP, which is essential for recognition of the pre-mRNA 5' splice-site and the subsequent assembly of the spliceosome. U1-C is directly involved in initial 5' splice-site recognition for both constitutive and regulated alternative splicing. The interaction with the 5' splice-site seems to precede base-pairing between the pre-mRNA and the U1 snRNA. Stimulates commitment or early (E) complex formation by stabilizing the base pairing of the 5' end of the U1 snRNA and the 5' splice-site region. The polypeptide is U1 small nuclear ribonucleoprotein C (Plasmodium chabaudi chabaudi).